Consider the following 982-residue polypeptide: MVFLKRFRAYGFKSYADEITINFTHSMTGIVGPNGSGKSNVVDALKWVLGERSMKHLRSKSGDDMIFFGSKDKPASKLAEVELTFDNSQKLLHDPRPEISVMRRIYRGSGQSEYYINGELVTLKEISGIFADIGLEKGSLGIISQGSVSWFVEAKPEERRKIFEDASGIGRYTKRKEEVTNQLARTVQNLKQVSIVLNELKKDLKKLTIQADKAQRFVKLKEELKELELSVLVADYLKSQGELDRFNHQIGYIEQDFKLHEPQLQLLEDQLNIFNQRFRDADEQSIKLQQELQAVYQTINELEQRKAVIDVQLKNELSKKDEKHKIQALKKLIRVDQAQLESLQAQVLKTTSEITLLTNELSTVQTELDTTKLNLNQNSAALVYQQAQQEFLKAQNEEWVKTNPAHVLVKNVKALTGLLNTLNTFLKFEKQYEKALLKALGKSIGYLVVNNNLAALKAIDFLLTNQIGQVTFLPIDDIAFDTKIAPEHMEILQQLDGFLGVGSDHVSCDESLQPIVNALLGQVIIASDLQAALKLSSYTYKLYRVVTLNGETVYAGGIIQGGYVKDNLSLYNLQEKLASSEANITQLEHNEKQLRTNLTSLETKLNELNKKLKYEEILLEKFNERVNHTNKAILSYKIEYEQLTNESFDGTPHSFDETRLVESLNRAWAERDELNSQLKLNQELKETLAKSIKLAEAKTADLRALLDEQRSQLVLAREGKIRFENTIHNITDKINGGYKLTMEFAIANYNKPIKLSTMQAQNKIARMQSQLDEMGPINLESIAEIADKQKRFDDINGEYESLQTAIKDLQTAIGEIDELACKEFDELIQKVNAELPKTFNYLFGGGSCQIRYTDTDNVLLSGIEVFANPPGKNVANLMLLSGGEKTLVALSVLFSILRVSAFPLVILDEAESALDPANVERFANIIGNSSNNTQFLIITHRQGTMMKCDMLLGAAMQTKGVTKTFAVSLEKAEQYISKDKQN.

Position 33–40 (Pro33–Asn40) interacts with ATP. 2 coiled-coil regions span residues Arg171–Asp235 and Gln263–Gln377. Positions Thr416 to Leu535 constitute an SMC hinge domain. 3 coiled-coil regions span residues Leu568–Asn627, Ala669–Leu713, and Ile753–Glu818.

This sequence belongs to the SMC family. Homodimer.

It localises to the cytoplasm. Required for chromosome condensation and partitioning. In Mycoplasma pneumoniae (strain ATCC 29342 / M129 / Subtype 1) (Mycoplasmoides pneumoniae), this protein is Chromosome partition protein Smc.